A 275-amino-acid polypeptide reads, in one-letter code: Spermidine/putrescine transport system permease protein PotB (275 aa).

Residues 1–21 form a helical membrane-spanning segment; that stretch reads MIVTIVGWLVLFVFLPNLMII. Topologically, residues 22–60 are periplasmic; it reads GTSFLTRDDASFVKMVFTLDNYTRLLDPLYFEVLLHSLN. The region spanning 55–261 is the ABC transmembrane type-1 domain; the sequence is LLHSLNMALI…IVMGLMLLVY (207 aa). The chain crosses the membrane as a helical span at residues 61–81; that stretch reads MALIATLACLVLGYPFAWFLA. Residues 82 to 89 are Cytoplasmic-facing; that stretch reads KLPHKVRP. A helical transmembrane segment spans residues 90 to 110; sequence LLLFLLIVPFWTNSLIRIYGL. The Periplasmic segment spans residues 111–135; it reads KIFLSTKGYLNEFLLWLGVIDTPIR. A helical transmembrane segment spans residues 136–156; sequence IMFTPSAVIIGLVYILLPFMV. The Cytoplasmic portion of the chain corresponds to 157–187; it reads MPLYSSIEKLDKPLLEAARDLGASKLQTFIR. The helical transmembrane segment at 188 to 208 threads the bilayer; that stretch reads IIIPLTMPGIIAGCLLVMLPA. Residues 209–241 lie on the Periplasmic side of the membrane; it reads MGLFYVSDLMGGAKNLLIGNVIKVQFLNIRDWP. Residues 242–262 form a helical membrane-spanning segment; the sequence is FGAATSITLTIVMGLMLLVYW. Over 263-275 the chain is Cytoplasmic; it reads RASRLLNKKVELE.

Belongs to the binding-protein-dependent transport system permease family. CysTW subfamily.

It is found in the cell inner membrane. Its function is as follows. Required for the activity of the bacterial periplasmic transport system of putrescine and spermidine. This is Spermidine/putrescine transport system permease protein PotB (potB) from Escherichia coli (strain K12).